The following is a 273-amino-acid chain: Outer surface protein A (273 aa).

The first 16 residues, 1 to 16 (MKKYLLGIGLILALIA), serve as a signal peptide directing secretion. Residue Cys17 is the site of N-palmitoyl cysteine attachment. The S-diacylglycerol cysteine moiety is linked to residue Cys17.

Belongs to the OspA lipoprotein family.

It is found in the cell outer membrane. It localises to the cell surface. In Borreliella burgdorferi (Lyme disease spirochete), this protein is Outer surface protein A.